The chain runs to 37 residues: Large ribosomal subunit protein bL36 (37 aa).

The protein belongs to the bacterial ribosomal protein bL36 family.

The sequence is that of Large ribosomal subunit protein bL36 from Nocardioides sp. (strain ATCC BAA-499 / JS614).